Reading from the N-terminus, the 331-residue chain is Aflatoxin B1 aldehyde reductase member 4 (331 aa).

An NADP(+)-binding site is contributed by Asp-44. Catalysis depends on Tyr-49, which acts as the Proton donor. Position 85 is a phosphoserine (Ser-85). Substrate is bound at residue His-113. NADP(+) contacts are provided by residues Ser-143–Asn-144, Gln-169, Asn-198–Lys-208, and Arg-222. Residue Tyr-232 coordinates substrate. Ser-290–Asn-298 lines the NADP(+) pocket.

This sequence belongs to the aldo/keto reductase family. Aldo/keto reductase 2 subfamily. In terms of tissue distribution, mainly expressed in uterus.

Can reduce the dialdehyde protein-binding form of aflatoxin B1 (AFB1) to the non-binding AFB1 dialcohol. May be involved in protection of liver against the toxic and carcinogenic effects of AFB1, a potent hepatocarcinogen. This Homo sapiens (Human) protein is Aflatoxin B1 aldehyde reductase member 4 (AKR7L).